A 40-amino-acid chain; its full sequence is Bacterioferritin heavy chain (40 aa).

The Ferritin-like diiron domain occupies 1 to 40 (MRGNPEVIDYLNMLIGGELAARDQYLIHSRMYEDWGLTKY). Position 18 (E18) interacts with Fe cation.

It belongs to the bacterioferritin family. As to quaternary structure, oligomer consisting of two types of subunits: light chain and heavy chain.

Its function is as follows. May perform analogous functions in iron detoxification and storage to that of animal ferritins. Contains approximately 750 iron atoms per molecule. This Absidia spinosa protein is Bacterioferritin heavy chain.